The sequence spans 209 residues: uncharacterized protein (209 aa).

2 disordered regions span residues M1–E80 and L164–E197. The segment covering S178–R189 has biased composition (low complexity).

This is an uncharacterized protein from Homo sapiens (Human).